Here is a 505-residue protein sequence, read N- to C-terminus: Glucose-6-phosphate 1-dehydrogenase (505 aa).

Position 2 is an N-acetylserine (Ser-2). NADP(+) contacts are provided by residues 18 to 25 and Arg-52; that span reads GASGDLAK. Position 142 is a phosphoserine (Ser-142). Phosphotyrosine is present on Tyr-145. Lys-157 is an NADP(+) binding site. D-glucose 6-phosphate contacts are provided by residues Lys-157, 187 to 191, Glu-225, and Asp-244; that span reads HYLGK. The active-site Proton acceptor is His-249. Arg-340 is an NADP(+) binding site. Lys-343 contributes to the D-glucose 6-phosphate binding site. Residues Lys-349, Arg-353, and Arg-375 each contribute to the NADP(+) site. Gln-377 contributes to the D-glucose 6-phosphate binding site. Residues 383–385 and Arg-470 each bind NADP(+); that span reads YLK.

Belongs to the glucose-6-phosphate dehydrogenase family.

The catalysed reaction is D-glucose 6-phosphate + NADP(+) = 6-phospho-D-glucono-1,5-lactone + NADPH + H(+). The protein operates within carbohydrate degradation; pentose phosphate pathway; D-ribulose 5-phosphate from D-glucose 6-phosphate (oxidative stage): step 1/3. Its function is as follows. Catalyzes the rate-limiting step of the oxidative pentose-phosphate pathway, which represents a route for the dissimilation of carbohydrates besides glycolysis. The main function of this enzyme is to provide reducing power (NADPH) and pentose phosphates for fatty acid and nucleic acid synthesis. This Saccharomyces cerevisiae (strain ATCC 204508 / S288c) (Baker's yeast) protein is Glucose-6-phosphate 1-dehydrogenase (ZWF1).